Reading from the N-terminus, the 70-residue chain is Small ribosomal subunit protein bS21 (70 aa).

It belongs to the bacterial ribosomal protein bS21 family.

This chain is Small ribosomal subunit protein bS21, found in Methylobacillus flagellatus (strain ATCC 51484 / DSM 6875 / VKM B-1610 / KT).